The primary structure comprises 469 residues: Ribulose bisphosphate carboxylase large chain (469 aa).

Residues 1 to 2 constitute a propeptide that is removed on maturation; the sequence is MS. At proline 3 the chain carries N-acetylproline. Position 14 is an N6,N6,N6-trimethyllysine (lysine 14). Residues asparagine 123 and threonine 173 each contribute to the substrate site. Lysine 175 acts as the Proton acceptor in catalysis. Lysine 177 is a substrate binding site. The Mg(2+) site is built by lysine 201, aspartate 203, and glutamate 204. Lysine 201 is modified (N6-carboxylysine). Histidine 294 acts as the Proton acceptor in catalysis. Substrate-binding residues include arginine 295, histidine 327, and serine 379.

It belongs to the RuBisCO large chain family. Type I subfamily. Heterohexadecamer of 8 large chains and 8 small chains; disulfide-linked. The disulfide link is formed within the large subunit homodimers. Requires Mg(2+) as cofactor. Post-translationally, the disulfide bond which can form in the large chain dimeric partners within the hexadecamer appears to be associated with oxidative stress and protein turnover.

It localises to the plastid. Its subcellular location is the chloroplast. The enzyme catalyses 2 (2R)-3-phosphoglycerate + 2 H(+) = D-ribulose 1,5-bisphosphate + CO2 + H2O. The catalysed reaction is D-ribulose 1,5-bisphosphate + O2 = 2-phosphoglycolate + (2R)-3-phosphoglycerate + 2 H(+). RuBisCO catalyzes two reactions: the carboxylation of D-ribulose 1,5-bisphosphate, the primary event in carbon dioxide fixation, as well as the oxidative fragmentation of the pentose substrate in the photorespiration process. Both reactions occur simultaneously and in competition at the same active site. The polypeptide is Ribulose bisphosphate carboxylase large chain (Atriplex patula (Common orache)).